A 420-amino-acid polypeptide reads, in one-letter code: Histidine--tRNA ligase (420 aa).

The protein belongs to the class-II aminoacyl-tRNA synthetase family. As to quaternary structure, homodimer.

Its subcellular location is the cytoplasm. It carries out the reaction tRNA(His) + L-histidine + ATP = L-histidyl-tRNA(His) + AMP + diphosphate + H(+). The sequence is that of Histidine--tRNA ligase (hisS) from Mycoplasmopsis pulmonis (strain UAB CTIP) (Mycoplasma pulmonis).